Reading from the N-terminus, the 206-residue chain is Putative transporter protein AmiS2 (206 aa).

The next 7 membrane-spanning stretches (helical) occupy residues valine 4 to valine 24, alanine 29 to isoleucine 49, serine 56 to isoleucine 76, glycine 86 to phenylalanine 106, valine 113 to glycine 133, phenylalanine 142 to isoleucine 162, and valine 173 to alanine 193.

Belongs to the AmiS/UreI family.

The protein resides in the cell membrane. Its function is as follows. Possible transporter that might be responsible for the adsorption of amidase substrates or release of their hydrolysis products. In Rhodococcus erythropolis (Arthrobacter picolinophilus), this protein is Putative transporter protein AmiS2 (amiS2).